The primary structure comprises 601 residues: DNA ligase 2 (601 aa).

An ATP-binding site is contributed by E263. Catalysis depends on K265, which acts as the N6-AMP-lysine intermediate. ATP-binding residues include R270, R285, E314, F354, R432, and K438.

It belongs to the ATP-dependent DNA ligase family. It depends on Mg(2+) as a cofactor.

The enzyme catalyses ATP + (deoxyribonucleotide)n-3'-hydroxyl + 5'-phospho-(deoxyribonucleotide)m = (deoxyribonucleotide)n+m + AMP + diphosphate.. In terms of biological role, DNA ligase that seals nicks in double-stranded DNA during DNA replication, DNA recombination and DNA repair. In Thermofilum pendens (strain DSM 2475 / Hrk 5), this protein is DNA ligase 2.